The following is a 54-amino-acid chain: UPF0057 membrane protein ssr1169 (54 aa).

A run of 2 helical transmembrane segments spans residues 3 to 23 and 31 to 51; these read IVKI…QVGI and LLLT…WVIA.

The protein belongs to the UPF0057 (PMP3) family.

It is found in the cell membrane. This Synechocystis sp. (strain ATCC 27184 / PCC 6803 / Kazusa) protein is UPF0057 membrane protein ssr1169.